The following is a 228-amino-acid chain: Urease accessory protein UreF 1 (228 aa).

This sequence belongs to the UreF family. In terms of assembly, ureD, UreF and UreG form a complex that acts as a GTP-hydrolysis-dependent molecular chaperone, activating the urease apoprotein by helping to assemble the nickel containing metallocenter of UreC. The UreE protein probably delivers the nickel.

It is found in the cytoplasm. Its function is as follows. Required for maturation of urease via the functional incorporation of the urease nickel metallocenter. This is Urease accessory protein UreF 1 from Brucella anthropi (strain ATCC 49188 / DSM 6882 / CCUG 24695 / JCM 21032 / LMG 3331 / NBRC 15819 / NCTC 12168 / Alc 37) (Ochrobactrum anthropi).